A 549-amino-acid chain; its full sequence is Glucose-6-phosphate isomerase (549 aa).

E353 functions as the Proton donor in the catalytic mechanism. Active-site residues include H384 and K510. A disordered region spans residues 523 to 549 (AEPPAAQSDSSTDALVRRYRSERGRTA). A compositionally biased stretch (basic and acidic residues) spans 537–549 (LVRRYRSERGRTA).

This sequence belongs to the GPI family.

The protein localises to the cytoplasm. The enzyme catalyses alpha-D-glucose 6-phosphate = beta-D-fructose 6-phosphate. The protein operates within carbohydrate biosynthesis; gluconeogenesis. Its pathway is carbohydrate degradation; glycolysis; D-glyceraldehyde 3-phosphate and glycerone phosphate from D-glucose: step 2/4. Functionally, catalyzes the reversible isomerization of glucose-6-phosphate to fructose-6-phosphate. The sequence is that of Glucose-6-phosphate isomerase from Mycolicibacterium gilvum (strain PYR-GCK) (Mycobacterium gilvum (strain PYR-GCK)).